The following is a 332-amino-acid chain: Sphingolipid delta(4)-desaturase DES1-like (332 aa).

The next 3 helical transmembrane spans lie at 55–75, 83–103, and 119–139; these read PWAFLKITLVVILQLSTAAIL, ILSIAYFFGSFLNHNLFLAIH, and CLGIFANLPIGVPMSVTFQKY. The Histidine box-1 motif lies at 103–107; that stretch reads HELSH. Positions 140-144 match the Histidine box-2 motif; that stretch reads HLEHH. 3 helical membrane-spanning segments follow: residues 164 to 184, 197 to 217, and 222 to 242; these read LVTNIFAKTIWVFLQLFFYAL, WEFINFLIQIVLDVSVVLFFG, and AYLILSTFVGGGMHPMAGHFI. The Histidine box-3 motif lies at 271-275; that stretch reads HNEHH.

Belongs to the fatty acid desaturase type 1 family. DEGS subfamily. In terms of tissue distribution, specifically expressed in flowers.

It is found in the endoplasmic reticulum membrane. The catalysed reaction is an N-acylsphinganine + 2 Fe(II)-[cytochrome b5] + O2 + 2 H(+) = an N-acylsphing-4-enine + 2 Fe(III)-[cytochrome b5] + 2 H2O. Functionally, sphingolipid-delta-4-desaturase required for the biosynthesis of delta-4-unsaturated sphingolipids and derivatives. May be required for the biosynthesis of glucosylceramides. The protein is Sphingolipid delta(4)-desaturase DES1-like of Arabidopsis thaliana (Mouse-ear cress).